We begin with the raw amino-acid sequence, 363 residues long: Ferredoxin--NADP reductase, cyanelle (363 aa).

A cyanelle-targeting transit peptide spans Met1–Ala65. In terms of domain architecture, FAD-binding FR-type spans Ala84–Met206. FAD contacts are provided by residues Arg142 to Ser145, Ser163 to Lys165, Tyr169, Val180 to Ser182, and Thr221. Residues Ser145 and Lys165 each coordinate NADP(+). Residues Thr221, Val253–Pro254, Ser283–Arg284, Lys293, Gly322–Leu323, and Glu361 contribute to the NADP(+) site.

This sequence belongs to the ferredoxin--NADP reductase type 1 family. FAD serves as cofactor.

Its subcellular location is the plastid. It is found in the cyanelle stroma. The protein resides in the cyanelle thylakoid membrane. The catalysed reaction is 2 reduced [2Fe-2S]-[ferredoxin] + NADP(+) + H(+) = 2 oxidized [2Fe-2S]-[ferredoxin] + NADPH. Its function is as follows. May play a key role in regulating the relative amounts of cyclic and non-cyclic electron flow to meet the demands of the plant for ATP and reducing power. This Cyanophora paradoxa protein is Ferredoxin--NADP reductase, cyanelle (PETH).